A 1550-amino-acid polypeptide reads, in one-letter code: MPEVRSSTQSESGMSQWMGKILSIRGAGLIIGVFGLCALIAATSVTLPPEQQLIVAFVCVVIFFIVGHKPSRRSQIFLEVLSGLVSLRYLTWRLTETLSFDTWLQGLLGTMLLVAELYALMMLFLSYFQTIAPLHRAPLPLPPNPDEWPTVDIFVPTYNEELSIVRLTVLGSLGIDWPPEKVRVHILDDGRRPEFAAFAAECGANYIARPTNEHAKAGNLNYAIGHTDGDYILIFDCDHVPTRAFLQLTMGWMVEDPKIALMQTPHHFYSPDPFQRNLSAGYRTPPEGNLFYGVVQDGNDFWDATFFCGSCAILRRTAIEQIGGFATQTVTEDAHTALKMQRLGWSTAYLRIPLAGGLATERLILHIGQRVRWARGMLQIFRIDNPLFGRGLSWGQRLCYLSAMTSFLFAVPRVIFLSSPLAFLFFGQNIIAASPLALLAYAIPHMFHAVGTASKINKGWRYSFWSEVYETTMALFLVRVTIVTLLSPSRGKFNVTDKGGLLEKGYFDLGAVYPNIILGLIMFGGLARGVYELSFGHLDQIAERAYLLNSAWAMLSLIIILAAIAVGRETQQKRNSHRIPATIPVEVANADGSIIVTGVTEDLSMGGAAVKMSWPAKLSGPTPVYIRTVLDGEELILPARIIRAGNGRGIFIWTIDNLQQEFSVIRLVFGRADAWVDWGNYKADRPLLSLMDMVLSVKGLFRSSGDIVHRSSPTKPSAGNALSDDTNNPSRKERVLKGTVKMVSLLALLTFASSAQAASAPRAVAAKAPAHQPEASDLPPLPALLPATSGAAQAGSGDAGADGPGSPTGQPLAADSADALVENAENTSDTATVHNYTLKDLGAAGSITMRGLAPLQGIEFGIPSDQLVTSARLVLSGSMSPNLRPETNSVTMTLNEQYIGTLRPDPAHPTFGPMSFEINPIFFVSGNRLNFNFASGSKGCSDITNDTLWATISQNSQLQITTIALPPRRLLSRLPQPFYDKNVRQHVTVPMVLAQTYDPQILKSAGILASWFGKQTDFLGVTFPVSSTIPQSGNAILIGVADELPTSFGRPQVNGPAVLELPNPSDANATILVVTGRDRDEVITASKGIAFASAPLPTDSHMDVAPVDIAPRKPNDAPSFIAMDHPVRFGDLVTASKLQGTGFTSGVLSVPFRIPPDLYTWRNRPYKMQVRFRSPAGEAKDVEKSRLDVGINEVYLHSYPLRETHGLIGAVLQGVGLARPASGMQVHDLDVPPWTVFGQDQLNFYFDAMPLARGICQSGAANNAFHLGLDPDSTIDFSRAHHIAQMPNLAYMATVGFPFTTYADLSQTAVVLPEHPNAATVGAYLDLMGFMGAATWYPVAGVDIVSADHVSDVADRNLLVISTLATSGEIAPLLSRSSYEVADGHLRTVSHASALDNAIKAVDDPLTAFRDRDSKPQDVDTPLTGGVGAMIEAESPLTAGRTVLALLSSDGAGLNNLLQMLGERKKQANIQGDLVVAHGEDLSSYRTSPVYTIGTLPLWLWPDWYMHNRPVRVLLVGLLGCILIVSVLARALARHAARRFKQLEDERRKS.

A catalytic region spans residues 1–741 (MPEVRSSTQS…KERVLKGTVK (741 aa)). The next 3 membrane-spanning stretches (helical) occupy residues 26–46 (GAGLIIGVFGLCALIAATSVT), 47–67 (LPPEQQLIVAFVCVVIFFIVG), and 106–126 (GLLGTMLLVAELYALMMLFLS). A catalytic subdomain A region spans residues 147 to 240 (EWPTVDIFVP…YILIFDCDHV (94 aa)). Asp-189 is a catalytic residue. Asp-236 and Asp-238 together coordinate substrate. The segment at 317–377 (TAIEQIGGFA…GQRVRWARGM (61 aa)) is catalytic subdomain B. Asp-333 is an active-site residue. 5 consecutive transmembrane segments (helical) span residues 398–418 (LCYLSAMTSFLFAVPRVIFLS), 423–443 (FLFFGQNIIAASPLALLAYAI), 468–488 (VYETTMALFLVRVTIVTLLSP), 507–527 (FDLGAVYPNIILGLIMFGGLA), and 547–567 (LLNSAWAMLSLIIILAAIAVG). The 76-residue stretch at 572-647 (QKRNSHRIPA…PARIIRAGNG (76 aa)) folds into the PilZ domain. 2 disordered regions span residues 708 to 731 (VHRSSPTKPSAGNALSDDTNNPSR) and 768 to 813 (APAH…QPLA). The tract at residues 742 to 1550 (MVSLLALLTF…KQLEDERRKS (809 aa)) is cyclic di-GMP binding domain. Low complexity predominate over residues 768–796 (APAHQPEASDLPPLPALLPATSGAAQAGS). Residues 1513–1533 (VLLVGLLGCILIVSVLARALA) form a helical membrane-spanning segment.

This sequence in the N-terminal section; belongs to the glycosyltransferase 2 family. In the C-terminal section; belongs to the AcsB/BcsB family. Mg(2+) serves as cofactor.

It localises to the cell inner membrane. It carries out the reaction [(1-&gt;4)-beta-D-glucosyl](n) + UDP-alpha-D-glucose = [(1-&gt;4)-beta-D-glucosyl](n+1) + UDP + H(+). It functions in the pathway glycan metabolism; bacterial cellulose biosynthesis. Functionally, bifunctional protein comprised of a catalytic subunit and a regulatory subunit. The catalytic subunit of cellulose synthase polymerizes uridine 5'-diphosphate glucose to cellulose in a processive way. The thick cellulosic mats generated by this enzyme probably provide a specialized protective environment to the bacterium. The regulatory subunit binds bis-(3'-5') cyclic diguanylic acid (c-di-GMP). This Novacetimonas hansenii (Komagataeibacter hansenii) protein is Cellulose synthase 1 (acsAB).